The sequence spans 479 residues: Ribulose bisphosphate carboxylase large chain 2 (479 aa).

2 residues coordinate substrate: Asn-116 and Thr-166. Lys-168 (proton acceptor) is an active-site residue. Lys-170 contributes to the substrate binding site. The Mg(2+) site is built by Lys-194, Asp-196, and Glu-197. Lys-194 carries the N6-carboxylysine modification. His-287 functions as the Proton acceptor in the catalytic mechanism. Residues Arg-288, His-320, and Ser-372 each coordinate substrate.

It belongs to the RuBisCO large chain family. Type I subfamily. Heterohexadecamer of 8 large chains and 8 small chains. The cofactor is Mg(2+).

The catalysed reaction is 2 (2R)-3-phosphoglycerate + 2 H(+) = D-ribulose 1,5-bisphosphate + CO2 + H2O. It catalyses the reaction D-ribulose 1,5-bisphosphate + O2 = 2-phosphoglycolate + (2R)-3-phosphoglycerate + 2 H(+). In terms of biological role, ruBisCO catalyzes two reactions: the carboxylation of D-ribulose 1,5-bisphosphate, the primary event in carbon dioxide fixation, as well as the oxidative fragmentation of the pentose substrate. Both reactions occur simultaneously and in competition at the same active site. This chain is Ribulose bisphosphate carboxylase large chain 2, found in Bradyrhizobium sp. (strain BTAi1 / ATCC BAA-1182).